The following is a 147-amino-acid chain: Cytochrome c-type biogenesis protein CcmE (147 aa).

Topologically, residues 1–7 (MTVRQRR) are cytoplasmic. Residues 8 to 28 (FAMVILVVIGVSIATGLGLKA) form a helical; Signal-anchor for type II membrane protein membrane-spanning segment. The Periplasmic portion of the chain corresponds to 29 to 147 (FQENILFFYN…KTKANTEDKL (119 aa)). Histidine 123 and tyrosine 127 together coordinate heme.

It belongs to the CcmE/CycJ family.

The protein resides in the cell inner membrane. Functionally, heme chaperone required for the biogenesis of c-type cytochromes. Transiently binds heme delivered by CcmC and transfers the heme to apo-cytochromes in a process facilitated by CcmF and CcmH. The protein is Cytochrome c-type biogenesis protein CcmE of Nitrosococcus oceani (strain ATCC 19707 / BCRC 17464 / JCM 30415 / NCIMB 11848 / C-107).